The following is a 406-amino-acid chain: Putative competence-damage inducible protein (406 aa).

It belongs to the CinA family.

The sequence is that of Putative competence-damage inducible protein from Natranaerobius thermophilus (strain ATCC BAA-1301 / DSM 18059 / JW/NM-WN-LF).